The sequence spans 185 residues: Large ribosomal subunit protein uL5 (185 aa).

It belongs to the universal ribosomal protein uL5 family. Part of the 50S ribosomal subunit; part of the 5S rRNA/L5/L18/L25 subcomplex. Contacts the 5S rRNA and the P site tRNA. Forms a bridge to the 30S subunit in the 70S ribosome.

Its function is as follows. This is one of the proteins that bind and probably mediate the attachment of the 5S RNA into the large ribosomal subunit, where it forms part of the central protuberance. In the 70S ribosome it contacts protein S13 of the 30S subunit (bridge B1b), connecting the 2 subunits; this bridge is implicated in subunit movement. Contacts the P site tRNA; the 5S rRNA and some of its associated proteins might help stabilize positioning of ribosome-bound tRNAs. In Bartonella tribocorum (strain CIP 105476 / IBS 506), this protein is Large ribosomal subunit protein uL5.